A 258-amino-acid chain; its full sequence is Small ribosomal subunit protein mS40 (258 aa).

A mitochondrion-targeting transit peptide spans 1-35 (MAASVLNTLLRRLPMLSLFRGAHRVQVPLQTLCTK). Ser-38 and Ser-49 each carry phosphoserine. The interval 218 to 258 (RLYQGHLREESGPPPESMPKMPPTAPAEASFTGQTDPQSAL) is disordered. A compositionally biased stretch (pro residues) spans 229-242 (GPPPESMPKMPPTA). Over residues 248 to 258 (FTGQTDPQSAL) the composition is skewed to polar residues.

The protein belongs to the bacterial ribosomal protein bS18 family. Mitochondrion-specific ribosomal protein mS40 subfamily. As to quaternary structure, component of the mitochondrial ribosome small subunit (28S) which comprises a 12S rRNA and about 30 distinct proteins.

Its subcellular location is the mitochondrion. In Macaca mulatta (Rhesus macaque), this protein is Small ribosomal subunit protein mS40 (MRPS18B).